The following is a 114-amino-acid chain: MSTMKFCRECNNILYPKEDKEQKILLYACRNCDHQEVADNSCVYRNEVHHSVSERTQILTDVASDPTLPRTKAVRCSKCQHREAVFFQATARGEEGMTLFFVCCNPNCGHRWRE.

The Zn(2+) site is built by Cys7, Cys10, Cys29, Cys32, Cys76, Cys79, Cys103, and Cys108. The segment at 72–113 (KAVRCSKCQHREAVFFQATARGEEGMTLFFVCCNPNCGHRWR) adopts a TFIIS-type zinc-finger fold.

This sequence belongs to the archaeal RpoM/eukaryotic RPA12/RPB9/RPC11 RNA polymerase family. As to quaternary structure, component of the RNA polymerase II, IV and V complexes. Interacts with NRPD1.

Its subcellular location is the nucleus. It localises to the nucleolus. DNA-dependent RNA polymerase catalyzes the transcription of DNA into RNA using the four ribonucleoside triphosphates as substrates. Component of RNA polymerase II which synthesizes mRNA precursors and many functional non-coding RNAs. Pol II is the central component of the basal RNA polymerase II transcription machinery. It is composed of mobile elements that move relative to each other. Component of RNA polymerases IV and V which mediate short-interfering RNAs (siRNA) accumulation and subsequent RNA-directed DNA methylation-dependent (RdDM) transcriptional gene silencing (TGS) of endogenous repeated sequences, including transposable elements. Required for RNA silencing. The protein is DNA-directed RNA polymerases II, IV and V subunit 9A (NRPB9A) of Arabidopsis thaliana (Mouse-ear cress).